The chain runs to 138 residues: Putative pre-16S rRNA nuclease (138 aa).

The protein belongs to the YqgF nuclease family.

The protein resides in the cytoplasm. Its function is as follows. Could be a nuclease involved in processing of the 5'-end of pre-16S rRNA. In Bacillus subtilis (strain 168), this protein is Putative pre-16S rRNA nuclease (yrrK).